Here is a 343-residue protein sequence, read N- to C-terminus: N-acetyl-gamma-glutamyl-phosphate reductase (343 aa).

The active site involves Cys147.

Belongs to the NAGSA dehydrogenase family. Type 1 subfamily.

The protein localises to the cytoplasm. The catalysed reaction is N-acetyl-L-glutamate 5-semialdehyde + phosphate + NADP(+) = N-acetyl-L-glutamyl 5-phosphate + NADPH + H(+). It participates in amino-acid biosynthesis; L-arginine biosynthesis; N(2)-acetyl-L-ornithine from L-glutamate: step 3/4. Catalyzes the NADPH-dependent reduction of N-acetyl-5-glutamyl phosphate to yield N-acetyl-L-glutamate 5-semialdehyde. This chain is N-acetyl-gamma-glutamyl-phosphate reductase, found in Listeria monocytogenes serovar 1/2a (strain ATCC BAA-679 / EGD-e).